The following is an 89-amino-acid chain: DNA/RNA-binding protein Alba (89 aa).

Lys11 carries the post-translational modification N6-acetyllysine.

Belongs to the histone-like Alba family. Acetylated. Acetylation at Lys-11 decreases DNA-binding affinity.

The protein resides in the cytoplasm. It is found in the chromosome. Binds double-stranded DNA tightly but without sequence specificity. Involved in DNA compaction. This is DNA/RNA-binding protein Alba from Thermoplasma acidophilum (strain ATCC 25905 / DSM 1728 / JCM 9062 / NBRC 15155 / AMRC-C165).